The primary structure comprises 195 residues: uncharacterized protein (195 aa).

Residues 86–158 (LPSEGGWTSG…PAPVSGEPPE (73 aa)) are disordered.

This is an uncharacterized protein from Homo sapiens (Human).